The primary structure comprises 192 residues: Ion-translocating oxidoreductase complex subunit B (192 aa).

A hydrophobic region spans residues 1-26 (MNAIWIAVAAVSLLGLAFGAILGYAS). One can recognise a 4Fe-4S domain in the interval 32-91 (EDDPVVEKIDEILPQSQCGQCGYPGCRPYAEAISCNGEKINRCAPGGEAVMLKIAELLNV). Positions 49, 52, 57, 74, 117, 120, 123, 127, 147, 150, 153, and 157 each coordinate [4Fe-4S] cluster. 2 consecutive 4Fe-4S ferredoxin-type domains span residues 108–137 (MVAV…GATR) and 138–167 (AMHT…LQPV).

It belongs to the 4Fe4S bacterial-type ferredoxin family. RnfB subfamily. As to quaternary structure, the complex is composed of six subunits: RsxA, RsxB, RsxC, RsxD, RsxE and RsxG. [4Fe-4S] cluster serves as cofactor.

The protein localises to the cell inner membrane. Its function is as follows. Part of a membrane-bound complex that couples electron transfer with translocation of ions across the membrane. Required to maintain the reduced state of SoxR. The polypeptide is Ion-translocating oxidoreductase complex subunit B (Escherichia coli O139:H28 (strain E24377A / ETEC)).